The following is a 373-amino-acid chain: Transcription factor NF-E2 45 kDa subunit (373 aa).

The segment at 1–83 (MSPCPPQQSR…SGFPLPPPPY (83 aa)) is required for interaction with MAPK8. A transactivation domain region spans residues 1 to 206 (MSPCPPQQSR…PAAETPLALE (206 aa)). 2 short sequence motifs (PXY motif) span residues 61–65 (PPTTY) and 79–83 (PPPPY). The interval 127–150 (LDIGLPAGPPKPQEDPESDSGLSL) is disordered. Serine 157 is subject to Phosphoserine; by MAPK8. Residue serine 170 is modified to Phosphoserine; by PKA. Residues 205-226 (LEPSSGPVRAKPTARGEAGSRD) form a disordered region. The bZIP domain maps to 266 to 329 (LVRDIRRRGK…EVMRQQLTEL (64 aa)). Residues 268-287 (RDIRRRGKNKVAAQNCRKRK) form a basic motif region. Residues 291 to 298 (IVQLEREL) are leucine-zipper. Lysine 368 is covalently cross-linked (Glycyl lysine isopeptide (Lys-Gly) (interchain with G-Cter in SUMO1)).

The protein belongs to the bZIP family. CNC subfamily. As to quaternary structure, homodimer; can bind DNA as a homodimer. Erythroid transcription activator nuclear factor erythroid-derived 2 (NF-E2), composed of a heterodimer of NFE2 and MAFK, possesses transactivation activity on beta-globin. Also forms high affinity heterodimer with MAFG; the interaction promotes erythropoiesis. Interacts (via the PXY motif 1) with ITCH (via the WW 1 domain); the interaction promotes 'Lys63'-linked ubiquitination of NFE2, translocates it to the cytoplasm and inhibits its transactivation activity. Interacts with KMT2D/MLL2; the interaction promotes transactivation of the beta-globin locus. Interacts with MAPK8 (phosphorylated form); the interaction leads to phosphorylation of NFE2 in undifferentiated cells. Phosphorylated on serine residues. In undifferentiated erythrocytes, phosphorylated by MAPK8 which then leads to ubiquitination and protein degradation. In terms of processing, sumoylated. Sumoylation is required for translocation to nuclear bodies PODs, anchoring to the gene loci, and transactivation of the beta-globin gene. Post-translationally, ubiquitinated mainly by 'Lys63'-linked ubiquitin. Polyubiquitination with 'Lys63'-linked ubiquitin by ITCH retains NFE2 in the cytoplasm preventing its transactivation activity. In undifferentiated erythrocyte, ubiquitinated after MAPK8-mediatd phosphorylation leading to protein degradation. Expressed in hematopoietic cells and also in colon and testis.

The protein localises to the nucleus. Its subcellular location is the PML body. It is found in the cytoplasm. Functionally, component of the NF-E2 complex essential for regulating erythroid and megakaryocytic maturation and differentiation. Binds to the hypersensitive site 2 (HS2) of the beta-globin control region (LCR). This subunit (NFE2) recognizes the TCAT/C sequence of the AP-1-like core palindrome present in a number of erythroid and megakaryocytic gene promoters. Requires MAFK or other small MAF proteins for binding to the NF-E2 motif. May play a role in all aspects of hemoglobin production from globin and heme synthesis to procurement of iron. The polypeptide is Transcription factor NF-E2 45 kDa subunit (NFE2) (Homo sapiens (Human)).